Reading from the N-terminus, the 428-residue chain is UPF0229 protein YeaH (428 aa).

The span at 77-90 (PGNDHFIQNDRIER) shows a compositional bias: basic and acidic residues. The tract at residues 77–111 (PGNDHFIQNDRIERPQSGGGGGSGSGQGQASQDGE) is disordered. Gly residues predominate over residues 93 to 103 (SGGGGGSGSGQ).

Belongs to the UPF0229 family.

The sequence is that of UPF0229 protein YeaH from Salmonella typhi.